A 274-amino-acid chain; its full sequence is Factor H binding protein (274 aa).

The signal sequence occupies residues 1–19 (MNRTAFCCLSLTTALILTA). Cys-20 is lipidated: N-palmitoyl cysteine. Residue Cys-20 is the site of S-diacylglycerol cysteine attachment. The interval 27 to 119 (VAADIGAGLA…LESGEFQVYK (93 aa)) is domain A. The domain B stretch occupies residues 120 to 183 (QSHSALTAFQ…TAFGSDDAGG (64 aa)). The tract at residues 184-274 (KLTYTIDFAA…IRHIGLAAKQ (91 aa)) is domain C.

The protein belongs to the factor H binding-protein family. As to quaternary structure, binds to host factor H (fH from human). Both fHbp beta-barrels contact Sushi domains 6 and 7 in fH (also called complement control protein domains, CCP). This interaction probably mimics the normal (carbohydrate-dependent) mode of fH recruitement, regulating fH activity. Sucrose octasulphate inhibits the fHbp-fH interaction. Post-translationally, protein is lipidated in N.meningitidis upon growth in radioactive palmitic acid, probably on Cys-20.

Its subcellular location is the cell outer membrane. It localises to the secreted. The protein localises to the extracellular vesicle. It is found in the bacterial extracellular vesicle. A bacterial surface lipoprotein that binds host (human) complement factor H (fH, gene CFH), binding contributes to the avoidance of complement-mediated lysis by N.meningitidis. Binding of fH to the bacteria surface is independent of bacterial sialic acid moieties. fH binding affinity is high enough that it may sequester plasma fH, depleting its circulating levels and de-regulating complement in the host. This protein induces high levels of bactericidal antibodies in mice. This chain is Factor H binding protein (fhbP), found in Neisseria meningitidis serogroup B (strain ATCC BAA-335 / MC58).